An 898-amino-acid chain; its full sequence is Chloride channel protein 2 (898 aa).

Residues 1-90 (MAAPAAAAVE…RCHKFLVSRV (90 aa)) are Cytoplasmic-facing. The interval 19–37 (QYEQTLMYGRYTQDLGAFA) is essential for channel gating by both voltage and cell volume. Residue Thr23 is modified to Phosphothreonine. A modulates channel gating by both voltage and cell volume region spans residues 39–52 (EEAARIRLGGPEPW). The next 2 helical transmembrane spans lie at 91–124 (GEDWIFLVLLGLLMALVSWAMDYAIAACLQAQQW) and 133–158 (LLLQYLAWVTYPVVLITFSAGFTQIL). A Selectivity filter part_1 motif is present at residues 164-168 (GSGIP). The segment at residues 167–174 (IPEMKTIL) is an intramembrane region (helical). Transmembrane regions (helical) follow at residues 183–201 (LTLKTFVAKVIGLTCALGS) and 208–226 (EGPFVHIASMCAALLSKFL). The short motif at 206–210 (GKEGP) is the Selectivity filter part_2 element. 2 consecutive intramembrane regions (helical) follow at residues 242–254 (MLAAACAVGVGCC) and 258–266 (PIGGVLFSI). The next 5 helical transmembrane spans lie at 278 to 298 (YWRGFFAATFSAFIFRVLAVW), 324 to 352 (LPAFAVIGIASGFGGALFVYLNRKIVQVM), 361 to 380 (FLMRKRLLFPALVTLLISTL), 432 to 452 (ANVFLTLVIFILMKFWMSALA), and 460 to 483 (GAFMPVFVIGAAFGRLVGESMAAW). A Selectivity filter part_3 motif is present at residues 460 to 464 (GAFMP). An intramembrane region (helical) is located at residues 500 to 514 (GGYAVVGAAALAGAV). Positions 515 to 516 (TH) form an intramembrane region, note=Loop between two helices. Residues 517–528 (TVSTAVIVFELT) constitute an intramembrane region (helical). Residues 529 to 533 (GQIAH) constitute an intramembrane region (note=Loop between two helices). The helical transmembrane segment at 534–551 (ILPVMIAVILANAVAQSL) threads the bilayer. Over 552 to 898 (QPSLYDSIIR…SPSDSDDKCQ (347 aa)) the chain is Cytoplasmic. Positions 587 to 645 (MVRDVPHVALSCTFRDLRLALHRTKGRTLALVESPESMILLGSIERTQVVALLAAQLSP) constitute a CBS 1 domain. Over residues 647-658 (RRRQSKQKRRVA) the composition is skewed to basic residues. The tract at residues 647 to 675 (RRRQSKQKRRVAHTSPPSCQESPPSPETS) is disordered. Ser710 carries the post-translational modification Phosphoserine. The segment at 726 to 766 (FCGSPPPEAASESEKSESSEKRKSKRVRISLASDSDLEGEM) is disordered. Over residues 737-746 (ESEKSESSEK) the composition is skewed to basic and acidic residues. Ser758 carries the post-translational modification Phosphoserine. The CBS 2 domain occupies 790–850 (IDPAPFQLVE…GSVTAQGVKV (61 aa)). Residues 812–813 (LL) carry the Basolateral membrane sorting motif. Residues 856-898 (SFRDSATSSSDTETTEVHALWGPRSRHGLPREGSPSDSDDKCQ) form a disordered region.

It belongs to the chloride channel (TC 2.A.49) family. ClC-2/CLCN2 subfamily. In terms of assembly, homodimer. Interacts with auxiliary subunit HEPACAM. In terms of processing, phosphorylated. Activated by dephosphorylation. Ubiquitously expressed.

It is found in the cell membrane. The protein resides in the basolateral cell membrane. Its subcellular location is the cell projection. The protein localises to the dendritic spine membrane. It localises to the axon. The enzyme catalyses chloride(in) = chloride(out). The catalysed reaction is thiocyanate(in) = thiocyanate(out). It carries out the reaction bromide(in) = bromide(out). It catalyses the reaction nitrate(in) = nitrate(out). The enzyme catalyses iodide(out) = iodide(in). Its activity is regulated as follows. Common gate kinetics are down-regulated by intracellular ATP. Inhibited by AK-42, a derivative of meclofenamate. Inhibited by Cd(2+). Inhibited by Zn(2+) and PKC activation. Inhibited at acidic pH. CCLN2:HEPACAM channel conductance is up-regulated upon hypo-osmolarity. Voltage-gated and osmosensitive chloride channel. Forms a homodimeric channel where each subunit has its own ion conduction pathway. Conducts double-barreled currents controlled by two types of gates, two fast glutamate gates that control each subunit independently and a slow common gate that opens and shuts off both subunits simultaneously. Displays inward rectification currents activated upon membrane hyperpolarization and extracellular hypotonicity. Contributes to chloride conductance involved in neuron excitability. In hippocampal neurons, generates a significant part of resting membrane conductance and provides an additional chloride efflux pathway to prevent chloride accumulation in dendrites upon GABA receptor activation. In glia, associates with the auxiliary subunit HEPACAM/GlialCAM at astrocytic processes and myelinated fiber tracts where it may regulate transcellular chloride flux buffering extracellular chloride and potassium concentrations. Regulates aldosterone production in adrenal glands. The opening of CLCN2 channels at hyperpolarized membrane potentials in the glomerulosa causes cell membrane depolarization, activation of voltage-gated calcium channels and increased expression of aldosterone synthase, the rate-limiting enzyme for aldosterone biosynthesis. Contributes to chloride conductance in retinal pigment epithelium involved in phagocytosis of shed photoreceptor outer segments and photoreceptor renewal. Conducts chloride currents at the basolateral membrane of epithelial cells with a role in chloride reabsorption rather than secretion. Permeable to small monovalent anions with chloride &gt; thiocyanate &gt; bromide &gt; nitrate &gt; iodide ion selectivity. In Oryctolagus cuniculus (Rabbit), this protein is Chloride channel protein 2 (CLCN2).